The following is a 401-amino-acid chain: Elongation factor Tu (401 aa).

A tr-type G domain is found at 10–209 (KPHINVGTIG…AVDEYIPTPQ (200 aa)). Residues 19-26 (GHVDHGKT) form a G1 region. Residue 19–26 (GHVDHGKT) coordinates GTP. Residue threonine 26 coordinates Mg(2+). Residues 60-64 (GITIA) form a G2 region. The interval 81–84 (DCPG) is G3. Residues 81–85 (DCPGH) and 136–139 (NKVD) each bind GTP. The G4 stretch occupies residues 136–139 (NKVD). Residues 174–176 (SAR) are G5.

The protein belongs to the TRAFAC class translation factor GTPase superfamily. Classic translation factor GTPase family. EF-Tu/EF-1A subfamily. In terms of assembly, monomer.

Its subcellular location is the cytoplasm. The enzyme catalyses GTP + H2O = GDP + phosphate + H(+). GTP hydrolase that promotes the GTP-dependent binding of aminoacyl-tRNA to the A-site of ribosomes during protein biosynthesis. This chain is Elongation factor Tu, found in Chloroflexus aurantiacus (strain ATCC 29366 / DSM 635 / J-10-fl).